Consider the following 279-residue polypeptide: Protein SCO2 homolog, mitochondrial (279 aa).

Residues 73–90 (LVVTLLFGGGIIGTWWYV) traverse the membrane as a helical segment. Residues 91 to 279 (HQEKEKRIQM…MKTFVRLFPD (189 aa)) are Mitochondrial intermembrane-facing. In terms of domain architecture, Thioredoxin spans 97–271 (RIQMQRLEQL…IAESIRNHMK (175 aa)). The Cu cation site is built by Cys145, Cys149, and His236. The cysteines at positions 145 and 149 are disulfide-linked.

Belongs to the SCO1/2 family. Homodimer.

The protein resides in the mitochondrion inner membrane. Copper metallochaperone essential for the synthesis and maturation of cytochrome c oxidase subunit II (MT-CO2/COX2) by facilitating the incorporation of copper into the Cu(A) site of MT-CO2/COX2. Could also act as a thiol-disulfide oxidoreductase to regulate the redox state of the cysteines in SCO1 during maturation of MT-CO2/COX2. This Danio rerio (Zebrafish) protein is Protein SCO2 homolog, mitochondrial (sco2).